Consider the following 504-residue polypeptide: MKNEKRKTGIEPKVFFPPLIIVGILCWLTVRDLDAANVVINAVFSYVTNVWGWAFEWYMVVMLFGWFWLVFGPYAKKRLGNEPPEFSTASWIFMMFASCTSAAVLFWGSIEIYYYISTPPFGLEPNSTGAKELGLAYSLFLWGPLPWATYSFLSVAFAYFFFVRKMEVIRPSSTLVPLVGEKHAKGLFGTIVDNFYLVALIFAMGTSLGLATPLVTECMQWLFGIPHTLQLDAIIITCWIILNAICVACGLQKGVRIASDVRSYLSFLMLGWVFIVSGASFIMNYFTDSVGMLLMYLPRMLFYTDPIAKGGFPQGWTVFYWAWWVIYAIQMSIFLARISRGRTVRELCFGMVMGLTASTWILWTVLGSNTLLLIDKNIINIPNLIEQYGVARAIIETWAALPLSTATMWGFFILCFIATVTLVNACSYTLAMSTCREVRDGEEPPLLVRIGWSILVGIIGIVLLALGGLKPIQTAIIAGGCPLFFVNIMVTLSFIKDAKQNWKD.

Transmembrane regions (helical) follow at residues 10-30 (IEPKVFFPPLIIVGILCWLTV), 51-71 (WGWAFEWYMVVMLFGWFWLVF), 92-112 (IFMMFASCTSAAVLFWGSIEI), 143-163 (GPLPWATYSFLSVAFAYFFFV), 195-215 (FYLVALIFAMGTSLGLATPLV), 231-251 (LDAIIITCWIILNAICVACGL), 263-283 (SYLSFLMLGWVFIVSGASFIM), 316-336 (WTVFYWAWWVIYAIQMSIFLA), 347-367 (LCFGMVMGLTASTWILWTVLG), 398-418 (WAALPLSTATMWGFFILCFIA), 446-466 (LLVRIGWSILVGIIGIVLLAL), and 475-495 (AIIAGGCPLFFVNIMVTLSFI).

Belongs to the BCCT transporter (TC 2.A.15) family. CaiT subfamily. As to quaternary structure, homotrimer.

The protein resides in the cell inner membrane. It carries out the reaction 4-(trimethylamino)butanoate(in) + (R)-carnitine(out) = 4-(trimethylamino)butanoate(out) + (R)-carnitine(in). Its pathway is amine and polyamine metabolism; carnitine metabolism. Functionally, catalyzes the exchange of L-carnitine for gamma-butyrobetaine. The sequence is that of L-carnitine/gamma-butyrobetaine antiporter from Escherichia coli O157:H7.